The following is a 229-amino-acid chain: MSNQGEYPEDNRVGKHEPHDLSLTRRDLIKVSAATAAAAVVYPHSTLAASVPAATPAPEIMPLTLKVNGKTEQLEVDTRTTLLDALRENLHLIGTKKGCDHGQCGACTVLVNGRRLNACLTLAVMHQGAEITTIEGLGSPDNLHPMQAAFIKHDGFQCGYCTSGQICSSVAVLKEIQDGIPSHVTVDLVSPPERTADEIRERMSGNICRCGAYANILAAIEDAAGEIKS.

The interval 1-21 is disordered; the sequence is MSNQGEYPEDNRVGKHEPHDL. A signal peptide (tat-type signal) is located at residues 1–53; sequence MSNQGEYPEDNRVGKHEPHDLSLTRRDLIKVSAATAAAAVVYPHSTLAASVPA. Over residues 9–21 the composition is skewed to basic and acidic residues; it reads EDNRVGKHEPHDL. Residues 61-137 form the 2Fe-2S ferredoxin-type domain; that stretch reads MPLTLKVNGK…GAEITTIEGL (77 aa). Positions 99, 104, 105, 107, 119, 158, 161, 208, and 210 each coordinate [2Fe-2S] cluster.

Heterotrimer composed of PaoA, PaoB and PaoC. Requires [2Fe-2S] cluster as cofactor. Exported by the Tat system. The position of the signal peptide cleavage has not been experimentally proven.

Its subcellular location is the periplasm. It carries out the reaction an aldehyde + A + H2O = a carboxylate + AH2 + H(+). Its function is as follows. Oxidizes aldehydes to the corresponding carboxylic acids with a preference for aromatic aldehydes. It might play a role in the detoxification of aldehydes to avoid cell damage. This Escherichia coli O157:H7 protein is Aldehyde oxidoreductase iron-sulfur-binding subunit PaoA.